The primary structure comprises 478 residues: Glutamate--tRNA ligase (478 aa).

The 'HIGH' region motif lies at 15-25 (PSPTGFLHIGG). The 'KMSKS' region motif lies at 244–248 (KLSKR). Lysine 247 is an ATP binding site.

This sequence belongs to the class-I aminoacyl-tRNA synthetase family. Glutamate--tRNA ligase type 1 subfamily. Monomer.

The protein resides in the cytoplasm. The catalysed reaction is tRNA(Glu) + L-glutamate + ATP = L-glutamyl-tRNA(Glu) + AMP + diphosphate. In terms of biological role, catalyzes the attachment of glutamate to tRNA(Glu) in a two-step reaction: glutamate is first activated by ATP to form Glu-AMP and then transferred to the acceptor end of tRNA(Glu). This is Glutamate--tRNA ligase from Bradyrhizobium sp. (strain ORS 278).